The chain runs to 875 residues: Alanine--tRNA ligase (875 aa).

Histidine 564, histidine 568, cysteine 666, and histidine 670 together coordinate Zn(2+).

Belongs to the class-II aminoacyl-tRNA synthetase family. As to quaternary structure, homotetramer. The cofactor is Zn(2+).

Its subcellular location is the cytoplasm. It carries out the reaction tRNA(Ala) + L-alanine + ATP = L-alanyl-tRNA(Ala) + AMP + diphosphate. Catalyzes the attachment of alanine to tRNA(Ala) in a two-step reaction: alanine is first activated by ATP to form Ala-AMP and then transferred to the acceptor end of tRNA(Ala). Also edits incorrectly charged Ser-tRNA(Ala) and Gly-tRNA(Ala) via its editing domain. This chain is Alanine--tRNA ligase, found in Klebsiella pneumoniae subsp. pneumoniae (strain ATCC 700721 / MGH 78578).